We begin with the raw amino-acid sequence, 364 residues long: Medium-wave-sensitive opsin 1 (364 aa).

Positions 1-24 are disordered; the sequence is MAQRWDPQRLAGGQPQDSHEDSTQ. Residues 1-52 are Extracellular-facing; that stretch reads MAQRWDPQRLAGGQPQDSHEDSTQSSIFTYTNSNATRGPFEGPNYHIAPRWV. The required for 11-cis-retinal regeneration stretch occupies residues 17-43; it reads DSHEDSTQSSIFTYTNSNATRGPFEGP. N34 carries an N-linked (GlcNAc...) asparagine glycan. The helical transmembrane segment at 53–77 threads the bilayer; that stretch reads YHITSTWMIIVVIASVFTNGLVLVA. Residues 78-89 are Cytoplasmic-facing; it reads TMKFKKLRHPLN. The helical transmembrane segment at 90 to 115 threads the bilayer; it reads WILVNLAIADLAETVIASTISVVNQL. Topologically, residues 116–129 are extracellular; it reads YGYFVLGHPLCVVE. C126 and C203 are oxidised to a cystine. A helical transmembrane segment spans residues 130–149; sequence GYTVSVCGITGLWSLAIISW. The Cytoplasmic segment spans residues 150 to 168; that stretch reads ERWLVVCKPFGNMRFDAKL. Residues 169–192 traverse the membrane as a helical segment; the sequence is AIVGIAFSWIWSAVWTAPPIFGWS. Residues 193-218 lie on the Extracellular side of the membrane; sequence RYWPYGLKTSCGPDVFSGTSYPGVQS. A helical transmembrane segment spans residues 219-246; that stretch reads YMMVLMVTCCIIPLSIIILCYLQVWLAI. Residues 247 to 268 are Cytoplasmic-facing; it reads RAVAKQQKESESTQKAEKEVTR. Residues 269–292 traverse the membrane as a helical segment; sequence MVVVMVFAYCLCWGPYTFFACFAT. Topologically, residues 293 to 300 are extracellular; sequence ANPGYAFH. Residues 301-320 form a helical membrane-spanning segment; the sequence is PLVAALPAYFAKSATIYNPI. K312 is subject to N6-(retinylidene)lysine. At 321-364 the chain is on the cytoplasmic side; that stretch reads IYVFMNRQFRNCILQLFGKKVDDTSELSSASKTEASSVSSVSPA.

This sequence belongs to the G-protein coupled receptor 1 family. Opsin subfamily. In terms of assembly, monomer. Homodimer. Homotetramer. O-glycosylated. Post-translationally, phosphorylated on some or all of the serine and threonine residues present in the C-terminal region. As to expression, expressed in cone photoreceptor cells.

It localises to the membrane. In terms of biological role, visual pigments are the light-absorbing molecules that mediate vision. They consist of an apoprotein, opsin, covalently linked to cis-retinal. May increase spectral sensitivity in dim light. This chain is Medium-wave-sensitive opsin 1 (OPN1MW), found in Sciurus carolinensis (Eastern gray squirrel).